Consider the following 355-residue polypeptide: Probable low-specificity L-threonine aldolase 2 (355 aa).

K211 carries the N6-(pyridoxal phosphate)lysine modification.

Belongs to the threonine aldolase family. Requires pyridoxal 5'-phosphate as cofactor. Expressed in roots, leaf vasculature and flowers.

The catalysed reaction is L-threonine = acetaldehyde + glycine. It catalyses the reaction L-allo-threonine = acetaldehyde + glycine. The protein operates within amino-acid degradation; L-threonine degradation via aldolase pathway; acetaldehyde and glycine from L-threonine: step 1/1. Functionally, threonine aldolase involved in threonine degradation to glycine. May play a role in the removal of L-allo-threonine. The polypeptide is Probable low-specificity L-threonine aldolase 2 (THA2) (Arabidopsis thaliana (Mouse-ear cress)).